Consider the following 72-residue polypeptide: Translation initiation factor IF-1 (72 aa).

Positions 1–72 (MAKEDTLEFP…TKGRINYRFK (72 aa)) constitute an S1-like domain.

Belongs to the IF-1 family. Component of the 30S ribosomal translation pre-initiation complex which assembles on the 30S ribosome in the order IF-2 and IF-3, IF-1 and N-formylmethionyl-tRNA(fMet); mRNA recruitment can occur at any time during PIC assembly.

The protein resides in the cytoplasm. Its function is as follows. One of the essential components for the initiation of protein synthesis. Stabilizes the binding of IF-2 and IF-3 on the 30S subunit to which N-formylmethionyl-tRNA(fMet) subsequently binds. Helps modulate mRNA selection, yielding the 30S pre-initiation complex (PIC). Upon addition of the 50S ribosomal subunit IF-1, IF-2 and IF-3 are released leaving the mature 70S translation initiation complex. This is Translation initiation factor IF-1 from Roseobacter denitrificans (strain ATCC 33942 / OCh 114) (Erythrobacter sp. (strain OCh 114)).